The primary structure comprises 964 residues: Glycine dehydrogenase (decarboxylating) (964 aa).

Polar residues predominate over residues 1–11 (MNSTLQNQTKT). The disordered stretch occupies residues 1-21 (MNSTLQNQTKTNLEKVGTDPL). N6-(pyridoxal phosphate)lysine is present on Lys-713.

This sequence belongs to the GcvP family. As to quaternary structure, the glycine cleavage system is composed of four proteins: P, T, L and H. Pyridoxal 5'-phosphate serves as cofactor.

The catalysed reaction is N(6)-[(R)-lipoyl]-L-lysyl-[glycine-cleavage complex H protein] + glycine + H(+) = N(6)-[(R)-S(8)-aminomethyldihydrolipoyl]-L-lysyl-[glycine-cleavage complex H protein] + CO2. Its function is as follows. The glycine cleavage system catalyzes the degradation of glycine. The P protein binds the alpha-amino group of glycine through its pyridoxal phosphate cofactor; CO(2) is released and the remaining methylamine moiety is then transferred to the lipoamide cofactor of the H protein. This chain is Glycine dehydrogenase (decarboxylating), found in Leptospira interrogans serogroup Icterohaemorrhagiae serovar Lai (strain 56601).